The chain runs to 156 residues: Ribonuclease pancreatic (156 aa).

An N-terminal signal peptide occupies residues 1–28 (MALEKSLVRLLLLVLILLVLGWVQPSLG). The segment covering 33 to 43 (AKKFQRQHMDS) has biased composition (basic and acidic residues). The segment at 33–53 (AKKFQRQHMDSDSSPSSSSTY) is disordered. Lysine 35 and arginine 38 together coordinate substrate. Histidine 40 (proton acceptor) is an active-site residue. Disulfide bonds link cysteine 54-cysteine 112, cysteine 68-cysteine 123, cysteine 86-cysteine 138, and cysteine 93-cysteine 100. A glycan (N-linked (GlcNAc...) asparagine; partial) is linked at asparagine 62. Substrate is bound by residues 69 to 73 (KPVNT) and lysine 94. An N-linked (GlcNAc...) asparagine glycan is attached at asparagine 104. Residue arginine 113 coordinates substrate. Residue asparagine 116 is glycosylated (N-linked (GlcNAc...) asparagine). The active-site Proton donor is histidine 147.

Belongs to the pancreatic ribonuclease family. As to quaternary structure, monomer. Interacts with and forms tight 1:1 complexes with RNH1. Dimerization of two such complexes may occur. Interaction with RNH1 inhibits this protein. In terms of processing, N-linked glycans are of complex type. As to expression, pancreas and other tissues and body fluids (indicating it may have other physiological functions besides its role in digestion).

It localises to the secreted. The enzyme catalyses an [RNA] containing cytidine + H2O = an [RNA]-3'-cytidine-3'-phosphate + a 5'-hydroxy-ribonucleotide-3'-[RNA].. It catalyses the reaction an [RNA] containing uridine + H2O = an [RNA]-3'-uridine-3'-phosphate + a 5'-hydroxy-ribonucleotide-3'-[RNA].. Endonuclease that catalyzes the cleavage of RNA on the 3' side of pyrimidine nucleotides. Acts on single-stranded and double-stranded RNA. This chain is Ribonuclease pancreatic (RNASE1), found in Homo sapiens (Human).